A 92-amino-acid polypeptide reads, in one-letter code: Small ribosomal subunit protein bS20 (92 aa).

Basic residues predominate over residues 1 to 11 (MANIKSQKKRI). Residues 1–22 (MANIKSQKKRIRQNEKARLRNK) form a disordered region.

Belongs to the bacterial ribosomal protein bS20 family.

Its function is as follows. Binds directly to 16S ribosomal RNA. The polypeptide is Small ribosomal subunit protein bS20 (Thermobifida fusca (strain YX)).